The following is a 570-amino-acid chain: MSNSKEVKSFLWTQSLRRELSGYCSNIKIQVIKDAQALLHGLDFSEVANVQRLMRKEKRDDSDLKRLRDLNQAVNNLVELKSVQQKNVLRVGTLTSDDLLVLAADLDRLKAKVIRGERPLAAGVYMGNLTAQQLEQRRVLLQMVGMGGGFRAGNTLGDGIVRVWDVRNPELLNNQFGTMPSLTIACMCKQGQADLNDVIQSLSDLGLVYTAKYPNMSDLDKLSQTHPILGIIEPKKSAINISGYNFSLSAAVKAGACLIDGGNMLETIKVTKSNLEGILKAALKVKRSLGMFVSDTPGERNPYENLLYKLCLSGEGWPYIASRTSIVGRAWDNTTVDLSGDVQQNAKPDKGNSNRLAQAQGMPAGLTYSQTMELKDSMLQLDPNAKTWIDIEGRPEDPVEIAIYQPNNGQYIHFYREPTDIKQFKQDSKHSHGIDIQDLFSVQPGLTSAVIESLPKNMVLSCQGADDIRKLLDSQNRRDIKLIDVSMQKDDARKFEDKIWDEYKHLCRMHTGIVTQKKKRGGKEEVTPHCALLDCLMFEAAVIGSPQIPTPRPVLSRDLVFRTGPPRVVL.

Residues 54 to 241 form a binding site for the cap structure m7GTP region; sequence MRKEKRDDSD…IEPKKSAINI (188 aa). Aspartate 390 and glutamate 392 together coordinate Mn(2+). Residues glutamate 400, cysteine 507, histidine 510, and cysteine 530 each coordinate Zn(2+). Aspartate 534 is a binding site for Mn(2+).

It belongs to the arenaviridae nucleocapsid protein family. Homomultimerizes to form the nucleocapsid. Binds to viral genomic RNA. Interacts with glycoprotein G2. Interacts with protein Z; this interaction probably directs the encapsidated genome to budding sites. Interacts with protein L; this interaction does not interfere with Z-L interaction. Interacts with host IKBKE (via Protein kinase domain); the interaction inhibits IKBKE kinase activity.

The protein resides in the virion. Its subcellular location is the host cytoplasm. Functionally, encapsidates the genome, protecting it from nucleases. The encapsidated genomic RNA is termed the nucleocapsid (NC). Serves as template for viral transcription and replication. The increased presence of protein N in host cell does not seem to trigger the switch from transcription to replication as observed in other negative strain RNA viruses. Through the interaction with host IKBKE, strongly inhibits the phosphorylation and nuclear translocation of host IRF3, a protein involved in interferon activation pathway, leading to the inhibition of interferon-beta and IRF3-dependent promoters activation. Also encodes a functional 3'-5' exoribonuclease that degrades preferentially dsRNA substrates and thereby participates in the suppression of interferon induction. The chain is Nucleoprotein from Mopeia virus (MOPV).